A 447-amino-acid chain; its full sequence is UDP-glucosyl transferase 79T1 (447 aa).

The Proton acceptor role is filled by histidine 18. Aspartate 116 (charge relay) is an active-site residue. Residues serine 265, tryptophan 323, valine 324, histidine 341, threonine 346, and glutamate 349 each contribute to the UDP site.

This sequence belongs to the UDP-glycosyltransferase family. In terms of tissue distribution, mainly expressed in flowers, flower buds and young leaves, and, to a lesser extent, in old leaves, stems and roots.

It participates in secondary metabolite biosynthesis; terpenoid biosynthesis. In terms of biological role, component of the oleanane-type triterpene saponins (e.g. saponarioside A and saponarioside B) biosynthetic pathway, leading to the production of natural products with detergent properties used as traditional sources of soap. A glycosyltransferase that mediates the conversion of QA-triF to QA-triFR via the elongation of the C-28 sugar chain with a deoxyhexose on the D-fucose moiety. The protein is UDP-glucosyl transferase 79T1 of Saponaria officinalis (Common soapwort).